The primary structure comprises 451 residues: Trigger factor (451 aa).

The region spanning Gly162–Pro243 is the PPIase FKBP-type domain.

It belongs to the FKBP-type PPIase family. Tig subfamily.

It localises to the cytoplasm. It catalyses the reaction [protein]-peptidylproline (omega=180) = [protein]-peptidylproline (omega=0). Functionally, involved in protein export. Acts as a chaperone by maintaining the newly synthesized protein in an open conformation. Functions as a peptidyl-prolyl cis-trans isomerase. The protein is Trigger factor of Corynebacterium aurimucosum (strain ATCC 700975 / DSM 44827 / CIP 107346 / CN-1) (Corynebacterium nigricans).